The following is a 1089-amino-acid chain: PALM2-AKAP2 fusion protein (1089 aa).

The stretch at 70-107 (SEEDEFKVKQLEDNIQRLEQEIQALESEESQISAKEQI) forms a coiled coil. Disordered stretches follow at residues 165–194 (SEDA…SPDH), 210–231 (PGVT…PSHN), and 289–362 (PAHS…SRDG). Residues 173 to 183 (SKQDNCGDSRL) are compositionally biased toward basic and acidic residues. A phosphoserine mark is found at Arg-315 and Ser-318. Residues 317–328 (PSDRMAEGERAN) are compositionally biased toward basic and acidic residues. Residues 329 to 347 (GHSTDQPQDLLGNSLQAPA) are compositionally biased toward polar residues. Residue Ser-348 is modified to Phosphoserine. The segment covering 348–357 (SPSSSTSSHC) has biased composition (low complexity). Residue Lys-370 forms a Glycyl lysine isopeptide (Lys-Gly) (interchain with G-Cter in SUMO1); alternate linkage. Lys-370 is covalently cross-linked (Glycyl lysine isopeptide (Lys-Gly) (interchain with G-Cter in SUMO2); alternate). Positions 429 to 517 (KNPGIAAKWW…LSTSQPCTAP (89 aa)) are disordered. Basic and acidic residues predominate over residues 455-470 (LESHRKYKERKEKRAQ). A compositionally biased stretch (low complexity) spans 471–508 (QEQLQLQQQQQQQLQQQQLQQQQLQQQQLQQQLQQQQL). At Ser-553 the chain carries Phosphoserine. The interval 592–644 (TVGGTLEDGGTQAAKEQKAPCVSESQSAGAGPANAATQGKEGPYSEPSKRGPL) is disordered. Residues Ser-678, Ser-682, and Ser-734 each carry the phosphoserine modification. Residues 712–749 (FSMDNISDSGASNETPSALQENSLADFSLPQTPQTDNP) show a composition bias toward polar residues. 3 disordered regions span residues 712–783 (FSMD…DPLE), 800–899 (EQVD…YFSK), and 915–934 (TQES…KQRT). Thr-743 bears the Phosphothreonine mark. The interval 782–795 (LEYQAGLLVQNAIQ) is PKA-RII subunit binding domain. Residues 801 to 814 (QVDKAEAHTSKEGS) show a composition bias toward basic and acidic residues. Position 847 is a phosphoserine (Ser-847). Residues 850–871 (QEKRDILPKNLPAEDRALREKG) show a composition bias toward basic and acidic residues. Positions 928–958 (RSRKQRTLSMIEEEIRAAQEREEELKRQRQV) form a coiled coil. 4 positions are modified to phosphoserine: Ser-936, Ser-964, Ser-995, and Ser-1002. The segment at 946-1021 (QEREEELKRQ…AAGTQRPKNL (76 aa)) is disordered.

Highly expressed in lung and weakly in thymus and cerebellum. Little or no expression in liver, heart and cerebral cortex. All isoforms are expressed in lung, but KL2A and KL2B isoforms are the principal isoforms in cerebellum.

The protein resides in the apical cell membrane. Functionally, binds to regulatory subunit (RII) of protein kinase A. May be involved in establishing polarity in signaling systems or in integrating PKA-RII isoforms with downstream effectors to capture, amplify and focus diffuse, trans-cellular signals carried by cAMP. Binds tp and modulates the structure of the actin cytoskeleton. The protein is PALM2-AKAP2 fusion protein of Mus musculus (Mouse).